Consider the following 239-residue polypeptide: Ribonuclease 3 (239 aa).

The 126-residue stretch at 12–137 (RAKLEALIGH…LIAAIYLDGG (126 aa)) folds into the RNase III domain. Glu50 serves as a coordination point for Mg(2+). Asp54 is an active-site residue. Mg(2+)-binding residues include Asp123 and Glu126. Glu126 is a catalytic residue. In terms of domain architecture, DRBM spans 162–231 (DAKTELQEWS…ATKMLEREGI (70 aa)).

The protein belongs to the ribonuclease III family. As to quaternary structure, homodimer. Mg(2+) serves as cofactor.

The protein localises to the cytoplasm. The enzyme catalyses Endonucleolytic cleavage to 5'-phosphomonoester.. Digests double-stranded RNA. Involved in the processing of primary rRNA transcript to yield the immediate precursors to the large and small rRNAs (23S and 16S). Processes some mRNAs, and tRNAs when they are encoded in the rRNA operon. Processes pre-crRNA and tracrRNA of type II CRISPR loci if present in the organism. This is Ribonuclease 3 from Rhizobium etli (strain ATCC 51251 / DSM 11541 / JCM 21823 / NBRC 15573 / CFN 42).